The chain runs to 279 residues: Phosphatidylglycerol--prolipoprotein diacylglyceryl transferase (279 aa).

3 consecutive transmembrane segments (helical) span residues 22 to 42, 52 to 72, and 89 to 109; these read WYGI…QAAL, LIDI…IYFV, and IWHG…SGII. Arg137 is an a 1,2-diacyl-sn-glycero-3-phospho-(1'-sn-glycerol) binding site. Helical transmembrane passes span 203–223 and 235–255; these read LGET…FVEA and IRVA…FVIY.

This sequence belongs to the Lgt family.

It localises to the cell membrane. The enzyme catalyses L-cysteinyl-[prolipoprotein] + a 1,2-diacyl-sn-glycero-3-phospho-(1'-sn-glycerol) = an S-1,2-diacyl-sn-glyceryl-L-cysteinyl-[prolipoprotein] + sn-glycerol 1-phosphate + H(+). Its pathway is protein modification; lipoprotein biosynthesis (diacylglyceryl transfer). Functionally, catalyzes the transfer of the diacylglyceryl group from phosphatidylglycerol to the sulfhydryl group of the N-terminal cysteine of a prolipoprotein, the first step in the formation of mature lipoproteins. This Staphylococcus epidermidis (strain ATCC 35984 / DSM 28319 / BCRC 17069 / CCUG 31568 / BM 3577 / RP62A) protein is Phosphatidylglycerol--prolipoprotein diacylglyceryl transferase.